The sequence spans 255 residues: High-affinity branched-chain amino acid transport ATP-binding protein LivG (255 aa).

One can recognise an ABC transporter domain in the interval 6 to 254 (LSVNGLMMRF…PDVIRAYLGE (249 aa)). Residue 38–45 (GPNGAGKT) participates in ATP binding.

This sequence belongs to the ABC transporter superfamily.

Component of the leucine-specific transport system. The polypeptide is High-affinity branched-chain amino acid transport ATP-binding protein LivG (livG) (Escherichia coli O157:H7).